Here is a 253-residue protein sequence, read N- to C-terminus: 5'-nucleotidase SurE (253 aa).

Positions 8, 9, 39, and 96 each coordinate a divalent metal cation.

Belongs to the SurE nucleotidase family. A divalent metal cation serves as cofactor.

Its subcellular location is the cytoplasm. The catalysed reaction is a ribonucleoside 5'-phosphate + H2O = a ribonucleoside + phosphate. Its function is as follows. Nucleotidase that shows phosphatase activity on nucleoside 5'-monophosphates. This chain is 5'-nucleotidase SurE, found in Rhodopirellula baltica (strain DSM 10527 / NCIMB 13988 / SH1).